A 248-amino-acid chain; its full sequence is 2,3-bisphosphoglycerate-dependent phosphoglycerate mutase (248 aa).

Residues 8–15 (RHGESTWN), 21–22 (TG), arginine 60, 87–90 (ERHY), lysine 98, 114–115 (RR), and 183–184 (GN) contribute to the substrate site. The active-site Tele-phosphohistidine intermediate is the histidine 9. Residue glutamate 87 is the Proton donor/acceptor of the active site.

Belongs to the phosphoglycerate mutase family. BPG-dependent PGAM subfamily. As to quaternary structure, homodimer.

It catalyses the reaction (2R)-2-phosphoglycerate = (2R)-3-phosphoglycerate. It functions in the pathway carbohydrate degradation; glycolysis; pyruvate from D-glyceraldehyde 3-phosphate: step 3/5. Catalyzes the interconversion of 2-phosphoglycerate and 3-phosphoglycerate. The protein is 2,3-bisphosphoglycerate-dependent phosphoglycerate mutase of Ralstonia nicotianae (strain ATCC BAA-1114 / GMI1000) (Ralstonia solanacearum).